A 137-amino-acid polypeptide reads, in one-letter code: Nucleoside diphosphate kinase (137 aa).

K10, F59, R87, T93, R104, and N114 together coordinate ATP. The active-site Pros-phosphohistidine intermediate is H117.

This sequence belongs to the NDK family. As to quaternary structure, homotetramer. The cofactor is Mg(2+).

The protein localises to the cytoplasm. It carries out the reaction a 2'-deoxyribonucleoside 5'-diphosphate + ATP = a 2'-deoxyribonucleoside 5'-triphosphate + ADP. The catalysed reaction is a ribonucleoside 5'-diphosphate + ATP = a ribonucleoside 5'-triphosphate + ADP. In terms of biological role, major role in the synthesis of nucleoside triphosphates other than ATP. The ATP gamma phosphate is transferred to the NDP beta phosphate via a ping-pong mechanism, using a phosphorylated active-site intermediate. In Streptomyces griseus subsp. griseus (strain JCM 4626 / CBS 651.72 / NBRC 13350 / KCC S-0626 / ISP 5235), this protein is Nucleoside diphosphate kinase.